The following is a 514-amino-acid chain: Beta-glucosidase 16 (514 aa).

The first 21 residues, 1–21, serve as a signal peptide directing secretion; that stretch reads MRGKFLSLLLLITLACIGVSA. Glutamine 49 provides a ligand contact to a beta-D-glucoside. Residue asparagine 80 is glycosylated (N-linked (GlcNAc...) asparagine). A beta-D-glucoside is bound by residues histidine 153 and 198-199; that span reads NE. The active-site Proton donor is the glutamate 199. Cysteine 218 and cysteine 226 are disulfide-bonded. Tyrosine 343 is a binding site for a beta-D-glucoside. An N-linked (GlcNAc...) asparagine glycan is attached at asparagine 357. A beta-D-glucoside-binding positions include glutamate 413, tryptophan 458, 465–466, and phenylalanine 474; that span reads EW. Catalysis depends on glutamate 413, which acts as the Nucleophile.

This sequence belongs to the glycosyl hydrolase 1 family. As to expression, expressed at low levels in cauline leaves and flowers.

It carries out the reaction Hydrolysis of terminal, non-reducing beta-D-glucosyl residues with release of beta-D-glucose.. This Arabidopsis thaliana (Mouse-ear cress) protein is Beta-glucosidase 16.